The following is a 721-amino-acid chain: Polyribonucleotide nucleotidyltransferase (721 aa).

D495 and D501 together coordinate Mg(2+). The region spanning 562–621 (PRLLSFRIDPELIGTVIGPGGRTIKGITERTNTKIDIEDGGIVTIASHDGAAAEEAQKII) is the KH domain. Residues 631-699 (GEIFPGVVTR…SRGRINLTLR (69 aa)) form the S1 motif domain.

It belongs to the polyribonucleotide nucleotidyltransferase family. The cofactor is Mg(2+).

The protein resides in the cytoplasm. It catalyses the reaction RNA(n+1) + phosphate = RNA(n) + a ribonucleoside 5'-diphosphate. Its function is as follows. Involved in mRNA degradation. Catalyzes the phosphorolysis of single-stranded polyribonucleotides processively in the 3'- to 5'-direction. The chain is Polyribonucleotide nucleotidyltransferase from Prochlorococcus marinus subsp. pastoris (strain CCMP1986 / NIES-2087 / MED4).